We begin with the raw amino-acid sequence, 143 residues long: Small ribosomal subunit protein uS12 (143 aa).

Pro-62 carries the hydroxyproline modification.

It belongs to the universal ribosomal protein uS12 family.

The chain is Small ribosomal subunit protein uS12 (rps23) from Dictyostelium discoideum (Social amoeba).